A 364-amino-acid chain; its full sequence is tRNA 2-selenouridine synthase (364 aa).

Residues 15-138 (FVNDTPLMDM…LRRFLIETID (124 aa)) enclose the Rhodanese domain. The active-site S-selanylcysteine intermediate is the C98.

Belongs to the SelU family. As to quaternary structure, monomer.

It carries out the reaction 5-methylaminomethyl-2-thiouridine(34) in tRNA + selenophosphate + (2E)-geranyl diphosphate + H2O + H(+) = 5-methylaminomethyl-2-selenouridine(34) in tRNA + (2E)-thiogeraniol + phosphate + diphosphate. The enzyme catalyses 5-methylaminomethyl-2-thiouridine(34) in tRNA + (2E)-geranyl diphosphate = 5-methylaminomethyl-S-(2E)-geranyl-thiouridine(34) in tRNA + diphosphate. It catalyses the reaction 5-methylaminomethyl-S-(2E)-geranyl-thiouridine(34) in tRNA + selenophosphate + H(+) = 5-methylaminomethyl-2-(Se-phospho)selenouridine(34) in tRNA + (2E)-thiogeraniol. The catalysed reaction is 5-methylaminomethyl-2-(Se-phospho)selenouridine(34) in tRNA + H2O = 5-methylaminomethyl-2-selenouridine(34) in tRNA + phosphate. Its function is as follows. Involved in the post-transcriptional modification of the uridine at the wobble position (U34) of tRNA(Lys), tRNA(Glu) and tRNA(Gln). Catalyzes the conversion of 2-thiouridine (S2U-RNA) to 2-selenouridine (Se2U-RNA). Acts in a two-step process involving geranylation of 2-thiouridine (S2U) to S-geranyl-2-thiouridine (geS2U) and subsequent selenation of the latter derivative to 2-selenouridine (Se2U) in the tRNA chain. The polypeptide is tRNA 2-selenouridine synthase (Photobacterium profundum (strain SS9)).